We begin with the raw amino-acid sequence, 273 residues long: NADPH-dependent 7-cyano-7-deazaguanine reductase (273 aa).

80-82 (VES) contacts substrate. 82-83 (SK) is a binding site for NADPH. The active-site Thioimide intermediate is the Cys180. Asp187 acts as the Proton donor in catalysis. 219–220 (HE) contacts substrate. 248-249 (RG) serves as a coordination point for NADPH.

It belongs to the GTP cyclohydrolase I family. QueF type 2 subfamily. Homodimer.

It is found in the cytoplasm. It carries out the reaction 7-aminomethyl-7-carbaguanine + 2 NADP(+) = 7-cyano-7-deazaguanine + 2 NADPH + 3 H(+). The protein operates within tRNA modification; tRNA-queuosine biosynthesis. In terms of biological role, catalyzes the NADPH-dependent reduction of 7-cyano-7-deazaguanine (preQ0) to 7-aminomethyl-7-deazaguanine (preQ1). This chain is NADPH-dependent 7-cyano-7-deazaguanine reductase, found in Bordetella parapertussis (strain 12822 / ATCC BAA-587 / NCTC 13253).